The chain runs to 312 residues: Glyoxylate/hydroxypyruvate reductase A (312 aa).

The active site involves Arg-227. The Proton donor role is filled by His-275.

This sequence belongs to the D-isomer specific 2-hydroxyacid dehydrogenase family. GhrA subfamily.

Its subcellular location is the cytoplasm. It carries out the reaction glycolate + NADP(+) = glyoxylate + NADPH + H(+). The catalysed reaction is (R)-glycerate + NAD(+) = 3-hydroxypyruvate + NADH + H(+). It catalyses the reaction (R)-glycerate + NADP(+) = 3-hydroxypyruvate + NADPH + H(+). In terms of biological role, catalyzes the NADPH-dependent reduction of glyoxylate and hydroxypyruvate into glycolate and glycerate, respectively. The sequence is that of Glyoxylate/hydroxypyruvate reductase A from Salmonella agona (strain SL483).